Consider the following 367-residue polypeptide: NADH-quinone oxidoreductase subunit D (367 aa).

The protein belongs to the complex I 49 kDa subunit family. In terms of assembly, NDH-1 is composed of 14 different subunits. Subunits NuoB, C, D, E, F, and G constitute the peripheral sector of the complex.

It localises to the cell inner membrane. The enzyme catalyses a quinone + NADH + 5 H(+)(in) = a quinol + NAD(+) + 4 H(+)(out). In terms of biological role, NDH-1 shuttles electrons from NADH, via FMN and iron-sulfur (Fe-S) centers, to quinones in the respiratory chain. The immediate electron acceptor for the enzyme in this species is believed to be ubiquinone. Couples the redox reaction to proton translocation (for every two electrons transferred, four hydrogen ions are translocated across the cytoplasmic membrane), and thus conserves the redox energy in a proton gradient. This chain is NADH-quinone oxidoreductase subunit D, found in Thermosipho melanesiensis (strain DSM 12029 / CIP 104789 / BI429).